The sequence spans 197 residues: UPF0637 protein LEUM_0496 (197 aa).

It belongs to the UPF0637 family.

This chain is UPF0637 protein LEUM_0496, found in Leuconostoc mesenteroides subsp. mesenteroides (strain ATCC 8293 / DSM 20343 / BCRC 11652 / CCM 1803 / JCM 6124 / NCDO 523 / NBRC 100496 / NCIMB 8023 / NCTC 12954 / NRRL B-1118 / 37Y).